Here is a 242-residue protein sequence, read N- to C-terminus: Segregation and condensation protein A (242 aa).

The protein belongs to the ScpA family. As to quaternary structure, component of a cohesin-like complex composed of ScpA, ScpB and the Smc homodimer, in which ScpA and ScpB bind to the head domain of Smc. The presence of the three proteins is required for the association of the complex with DNA.

It localises to the cytoplasm. Its function is as follows. Participates in chromosomal partition during cell division. May act via the formation of a condensin-like complex containing Smc and ScpB that pull DNA away from mid-cell into both cell halves. This Lactococcus lactis subsp. lactis (strain IL1403) (Streptococcus lactis) protein is Segregation and condensation protein A.